Reading from the N-terminus, the 252-residue chain is GPI alpha-1,4-mannosyltransferase I, stabilizing subunit (252 aa).

Positions 1 to 22 (MAASALAWLLLWAAGLVGRLAA) are cleaved as a signal peptide. N-linked (GlcNAc...) asparagine glycans are attached at residues Asn97 and Asn209. Residues 225–245 (VCSVTLLITVLCSTLILLAVF) traverse the membrane as a helical segment.

Belongs to the PIGX family. Part of the glycosylphosphatidylinositol-mannosyltransferase I complex that is composed of PIGM and PIGX. Interacts with PIGM; PIGX stabilizes PIGM.

Its subcellular location is the endoplasmic reticulum membrane. It participates in glycolipid biosynthesis; glycosylphosphatidylinositol-anchor biosynthesis. Functionally, stabilizing subunit of the glycosylphosphatidylinositol-mannosyltransferase I complex which catalyzes the transfer of the first mannose, via an alpha-1,4 bond from a dolichol-phosphate-mannose (Dol-P-Man) to the glucosaminyl acyl phosphatidylinositol (GlcN-(acyl)PI) intermediate to generate alpha-D-Man-(1-&gt;4)-alpha-D-GlcN-(1-&gt;6)-(1-radyl,2-acyl-sn-glycero-3-phospho)-2-acyl-inositol and participates in the sixth step of the glycosylphosphatidylinositol-anchor biosynthesis. Probably acts by stabilizing the mannosyltransferase PIGM. This Rattus norvegicus (Rat) protein is GPI alpha-1,4-mannosyltransferase I, stabilizing subunit.